The primary structure comprises 425 residues: GTPase Obg (425 aa).

In terms of domain architecture, Obg spans 1–158 (MFIDKARIFV…RWITLELKMI (158 aa)). The 172-residue stretch at 159–330 (ADVGLLGFPN…VIAYVSKMLK (172 aa)) folds into the OBG-type G domain. Residues 165–172 (GFPNVGKS), 190–194 (FTTLT), 212–215 (DIPG), 282–285 (NKFD), and 311–313 (SAA) contribute to the GTP site. The Mg(2+) site is built by Ser172 and Thr192. Residues 344-425 (YRPELDIGTE…IYELEFEFYN (82 aa)) form the OCT domain.

It belongs to the TRAFAC class OBG-HflX-like GTPase superfamily. OBG GTPase family. Monomer. Requires Mg(2+) as cofactor.

It localises to the cytoplasm. An essential GTPase which binds GTP, GDP and possibly (p)ppGpp with moderate affinity, with high nucleotide exchange rates and a fairly low GTP hydrolysis rate. Plays a role in control of the cell cycle, stress response, ribosome biogenesis and in those bacteria that undergo differentiation, in morphogenesis control. The protein is GTPase Obg of Clostridioides difficile (strain 630) (Peptoclostridium difficile).